A 476-amino-acid chain; its full sequence is Cysteine--tRNA ligase (476 aa).

C27 contributes to the Zn(2+) binding site. A 'HIGH' region motif is present at residues 29–39 (PTTYNYIHLGN). Residues C207, H232, and E236 each contribute to the Zn(2+) site. The 'KMSKS' region signature appears at 264 to 268 (KMSKS). K267 is a binding site for ATP.

This sequence belongs to the class-I aminoacyl-tRNA synthetase family. Monomer. Requires Zn(2+) as cofactor.

It localises to the cytoplasm. It carries out the reaction tRNA(Cys) + L-cysteine + ATP = L-cysteinyl-tRNA(Cys) + AMP + diphosphate. In Moorella thermoacetica (strain ATCC 39073 / JCM 9320), this protein is Cysteine--tRNA ligase.